A 53-amino-acid polypeptide reads, in one-letter code: Photosystem II reaction center protein K (53 aa).

The propeptide occupies 1–16; sequence MLKFYLENVFHLIFFA. Residues 28-48 form a helical membrane-spanning segment; the sequence is IVNVMPIIPLFFFLLAFVWQA.

This sequence belongs to the PsbK family. As to quaternary structure, PSII is composed of 1 copy each of membrane proteins PsbA, PsbB, PsbC, PsbD, PsbE, PsbF, PsbH, PsbI, PsbJ, PsbK, PsbL, PsbM, PsbT, PsbX, PsbY, PsbZ, Psb30/Ycf12, at least 3 peripheral proteins of the oxygen-evolving complex and a large number of cofactors. It forms dimeric complexes.

It is found in the plastid. The protein localises to the chloroplast thylakoid membrane. Its function is as follows. One of the components of the core complex of photosystem II (PSII). PSII is a light-driven water:plastoquinone oxidoreductase that uses light energy to abstract electrons from H(2)O, generating O(2) and a proton gradient subsequently used for ATP formation. It consists of a core antenna complex that captures photons, and an electron transfer chain that converts photonic excitation into a charge separation. This Huperzia lucidula (Shining clubmoss) protein is Photosystem II reaction center protein K.